The primary structure comprises 297 residues: Tyrosine recombinase XerC (297 aa).

The 83-residue stretch at 1-83 folds into the Core-binding (CB) domain; it reads MAILDEFDEH…AVKAFTAWAK (83 aa). Residues 104-291 form the Tyr recombinase domain; it reads TLPAVLRQDQ…AVSRLRVVHD (188 aa). Active-site residues include Arg-148, Lys-172, His-243, Arg-246, and His-269. The active-site O-(3'-phospho-DNA)-tyrosine intermediate is Tyr-278.

The protein belongs to the 'phage' integrase family. XerC subfamily. As to quaternary structure, forms a cyclic heterotetrameric complex composed of two molecules of XerC and two molecules of XerD.

The protein localises to the cytoplasm. Site-specific tyrosine recombinase, which acts by catalyzing the cutting and rejoining of the recombining DNA molecules. The XerC-XerD complex is essential to convert dimers of the bacterial chromosome into monomers to permit their segregation at cell division. It also contributes to the segregational stability of plasmids. This Mycobacterium leprae (strain TN) protein is Tyrosine recombinase XerC.